The primary structure comprises 304 residues: Acetylglutamate kinase (304 aa).

Substrate is bound by residues 72 to 73 (GG), R94, and N199.

It belongs to the acetylglutamate kinase family. ArgB subfamily.

It localises to the cytoplasm. It catalyses the reaction N-acetyl-L-glutamate + ATP = N-acetyl-L-glutamyl 5-phosphate + ADP. It participates in amino-acid biosynthesis; L-arginine biosynthesis; N(2)-acetyl-L-ornithine from L-glutamate: step 2/4. In terms of biological role, catalyzes the ATP-dependent phosphorylation of N-acetyl-L-glutamate. The sequence is that of Acetylglutamate kinase from Methylobacterium nodulans (strain LMG 21967 / CNCM I-2342 / ORS 2060).